We begin with the raw amino-acid sequence, 98 residues long: NADH-ubiquinone oxidoreductase chain 4L (98 aa).

The next 3 helical transmembrane spans lie at 1-21, 29-49, and 61-81; these read MSMV…GLLV, SLLC…ITIL, and IILL…LVMV.

This sequence belongs to the complex I subunit 4L family. Core subunit of respiratory chain NADH dehydrogenase (Complex I) which is composed of 45 different subunits.

Its subcellular location is the mitochondrion inner membrane. It catalyses the reaction a ubiquinone + NADH + 5 H(+)(in) = a ubiquinol + NAD(+) + 4 H(+)(out). Core subunit of the mitochondrial membrane respiratory chain NADH dehydrogenase (Complex I) which catalyzes electron transfer from NADH through the respiratory chain, using ubiquinone as an electron acceptor. Part of the enzyme membrane arm which is embedded in the lipid bilayer and involved in proton translocation. The chain is NADH-ubiquinone oxidoreductase chain 4L (MT-ND4L) from Mephitis mephitis (Striped skunk).